A 1129-amino-acid polypeptide reads, in one-letter code: A-kinase anchor protein 11 (1129 aa).

Over residues 1 to 12 (MQKMQCHLRRPL) the composition is skewed to basic residues. The interval 1–21 (MQKMQCHLRRPLHSSSSFSSQ) is disordered. 2 positions are modified to phosphothreonine: Thr-251 and Thr-363. 3 disordered regions span residues 354 to 376 (IRDR…QTSS), 394 to 416 (EFAP…SENE), and 434 to 455 (SEEV…SEHS). A compositionally biased stretch (polar residues) spans 404 to 416 (PHNSSVGSLSENE). Phosphoserine occurs at positions 434, 439, and 440. Residues 442–455 (GEEHPEMDVKSEHS) show a composition bias toward basic and acidic residues. Ser-595 is modified (phosphoserine). Thr-742 bears the Phosphothreonine mark. Phosphoserine is present on Ser-835. Residues 905-918 (LAEKIVAEAIEKAE) are PKA-RII binding region. Positions 962–1061 (SKEVEDFQST…QEDGAEGLQP (100 aa)) are disordered. Positions 968–995 (FQSTESLGSQQMNLSVGEDSTGSWSNLS) are enriched in polar residues. Over residues 1002 to 1011 (DESSSFHHLS) the composition is skewed to basic and acidic residues. The span at 1012–1028 (ESSNGNSSSWSSLGLEG) shows a compositional bias: low complexity. The segment covering 1033–1042 (NNLSFPTSDS) has biased composition (polar residues). The segment covering 1043-1056 (DGPDDRESEQEDGA) has biased composition (acidic residues).

Expressed in brain and testis.

The protein localises to the peroxisome. Its function is as follows. Binds to type II regulatory subunits of protein kinase A and anchors/targets them. This Rattus norvegicus (Rat) protein is A-kinase anchor protein 11 (Akap11).